A 285-amino-acid polypeptide reads, in one-letter code: Protein phosphatase 1 regulatory subunit 3B (285 aa).

Positions arginine 62–phenylalanine 65 match the PP1-binding motif motif. Residues arginine 125 to isoleucine 233 enclose the CBM21 domain. Serine 261 carries the post-translational modification Phosphoserine.

Interacts with glycogen, PPP1CC catalytic subunit of PP1 and PYGL. Associates with glycogen particles. Forms complexes with debranching enzyme, glycogen phosphorylase, glycogen synthase and phosphorylase kinase which is necessary for its regulation of PP1 activity. In terms of tissue distribution, highly expressed in the liver and, at lower levels, in skeletal muscle, including in vastus lateralis, gastrocnemius and soleus (at protein level). Highest mRNA levels are observed in skeletal muscle, and only moderate levels in liver and heart. Weak expression in placenta and lung.

In terms of biological role, acts as a glycogen-targeting subunit for phosphatase PP1. Facilitates interaction of the PP1 with enzymes of the glycogen metabolism and regulates its activity. Suppresses the rate at which PP1 dephosphorylates (inactivates) glycogen phosphorylase and enhances the rate at which it activates glycogen synthase and therefore limits glycogen breakdown. Its activity is inhibited by PYGL, resulting in inhibition of the glycogen synthase and glycogen phosphorylase phosphatase activities of PP1. Dramatically increases basal and insulin-stimulated glycogen synthesis upon overexpression in hepatocytes. The protein is Protein phosphatase 1 regulatory subunit 3B (PPP1R3B) of Homo sapiens (Human).